Consider the following 353-residue polypeptide: UPF0283 membrane protein KPN78578_12740 (353 aa).

Helical transmembrane passes span 70 to 90 (MVSAGLAIFGVSVVAQGVQWT), 99 to 119 (WIALGGCVAGALIVGAGVGSL), and 213 to 233 (ESTLMIAVSPLALVDMAFIAW).

Belongs to the UPF0283 family.

It localises to the cell inner membrane. This is UPF0283 membrane protein KPN78578_12740 from Klebsiella pneumoniae subsp. pneumoniae (strain ATCC 700721 / MGH 78578).